The following is an 870-amino-acid chain: MTQQPQAKYRHDYRAPDYQITDIDLTFDLDAQKTVVTAVSQAVRHGASDAPLRLNGEDLKLVSVHINDEPWTAWKEEEGALVISNLPERFTLKIINEISPAANTALEGLYQSGDALCTQCEAEGFRHITYYLDRPDVLARFTTKIIADKIKYPFLLSNGNRVAQGELENGRHWVQWQDPFPKPCYLFALVAGDFDVLRDTFTTRSGREVALELYVDRGNLDRAPWAMTSLKNSMKWDEERFGLEYDLDIYMIVAVDFFNMGAMENKGLNIFNSKYVLARTDTATDKDYLDIERVIGHEYFHNWTGNRVTCRDWFQLSLKEGLTVFRDQEFSSDLGSRAVNRINNVRTMRGLQFAEDASPMAHPIRPDMVIEMNNFYTLTVYEKGAEVIRMIHTLLGEENFQKGMQLYFERHDGSAATCDDFVQAMEDASNVDLSHFRRWYSQSGTPIVTVKDDYNPETEQYTLTISQRTPATPDQAEKQPLHIPFAIELYDNEGKVIPLQKGGHPVNSVLNVTQAEQTFVFDNVYFQPVPALLCEFSAPVKLEYKWSDQQLTFLMRHARNDFSRWDAAQSLLATYIKLNVARHQQGQPLSLPVHVADAFRAVLLDEKIDPALAAEILTLPSVNEMAELFDIIDPIAIAEVREALTRTLATELADELLAIYNANYQSEYRVEHEDIAKRTLRNACLRFLAFGETHLADVLVSKQFHEANNMTDALAALSAAVAAQLPCRDALMQEYDDKWHQNGLVMDKWFILQATSPAANVLETVRGLLQHRSFTMSNPNRIRSLIGAFAGSNPAAFHAEDGSGYLFLVEMLTDLNSRNPQVASRLIEPLIRLKRYDAKRQEKMRAALEQLKGLENLSGDLYEKITKALA.

Substrate-binding positions include Glu-121 and 261–265 (GAMEN). His-297 contributes to the Zn(2+) binding site. The active-site Proton acceptor is Glu-298. Zn(2+) contacts are provided by His-301 and Glu-320.

Belongs to the peptidase M1 family. Zn(2+) is required as a cofactor.

The protein localises to the cell inner membrane. The enzyme catalyses Release of an N-terminal amino acid, Xaa-|-Yaa- from a peptide, amide or arylamide. Xaa is preferably Ala, but may be most amino acids including Pro (slow action). When a terminal hydrophobic residue is followed by a prolyl residue, the two may be released as an intact Xaa-Pro dipeptide.. Functionally, aminopeptidase N is involved in the degradation of intracellular peptides generated by protein breakdown during normal growth as well as in response to nutrient starvation. The chain is Aminopeptidase N (pepN) from Escherichia coli (strain K12).